A 750-amino-acid polypeptide reads, in one-letter code: Photosystem I P700 chlorophyll a apoprotein A1 (750 aa).

8 consecutive transmembrane segments (helical) span residues 70–93 (VFSA…FHGA), 156–179 (LYCT…FHYH), 195–219 (LNHH…HVSL), 291–309 (IAHH…GHMY), 346–369 (WHAQ…HHMY), 385–411 (LSLF…IFMV), 433–455 (AIIS…LYIH), and 531–549 (FLVH…LILL). The [4Fe-4S] cluster site is built by cysteine 573 and cysteine 582. A run of 2 helical transmembrane segments spans residues 589-610 (HVFL…HFSW) and 664-686 (LSAY…MFLF). Histidine 675 lines the chlorophyll a' pocket. Chlorophyll a-binding residues include methionine 683 and tyrosine 691. Tryptophan 692 serves as a coordination point for phylloquinone. A helical transmembrane segment spans residues 724-744 (AVGVTHYLLGGIATTWAFFLA).

The protein belongs to the PsaA/PsaB family. In terms of assembly, the PsaA/B heterodimer binds the P700 chlorophyll special pair and subsequent electron acceptors. PSI consists of a core antenna complex that captures photons, and an electron transfer chain that converts photonic excitation into a charge separation. The eukaryotic PSI reaction center is composed of at least 11 subunits. P700 is a chlorophyll a/chlorophyll a' dimer, A0 is one or more chlorophyll a, A1 is one or both phylloquinones and FX is a shared 4Fe-4S iron-sulfur center. serves as cofactor.

The protein resides in the plastid. It localises to the chloroplast thylakoid membrane. It carries out the reaction reduced [plastocyanin] + hnu + oxidized [2Fe-2S]-[ferredoxin] = oxidized [plastocyanin] + reduced [2Fe-2S]-[ferredoxin]. In terms of biological role, psaA and PsaB bind P700, the primary electron donor of photosystem I (PSI), as well as the electron acceptors A0, A1 and FX. PSI is a plastocyanin-ferredoxin oxidoreductase, converting photonic excitation into a charge separation, which transfers an electron from the donor P700 chlorophyll pair to the spectroscopically characterized acceptors A0, A1, FX, FA and FB in turn. Oxidized P700 is reduced on the lumenal side of the thylakoid membrane by plastocyanin. This is Photosystem I P700 chlorophyll a apoprotein A1 from Aethionema cordifolium (Lebanon stonecress).